The following is a 214-amino-acid chain: Probable transaldolase 1 (214 aa).

Residue Lys83 is the Schiff-base intermediate with substrate of the active site.

This sequence belongs to the transaldolase family. Type 3B subfamily.

It is found in the cytoplasm. It carries out the reaction D-sedoheptulose 7-phosphate + D-glyceraldehyde 3-phosphate = D-erythrose 4-phosphate + beta-D-fructose 6-phosphate. It participates in carbohydrate degradation; pentose phosphate pathway; D-glyceraldehyde 3-phosphate and beta-D-fructose 6-phosphate from D-ribose 5-phosphate and D-xylulose 5-phosphate (non-oxidative stage): step 2/3. Transaldolase is important for the balance of metabolites in the pentose-phosphate pathway. The polypeptide is Probable transaldolase 1 (Listeria monocytogenes serotype 4b (strain F2365)).